We begin with the raw amino-acid sequence, 665 residues long: Cysteine-rich receptor-like protein kinase 41 (665 aa).

The N-terminal stretch at 1-27 (MTSSCSLSRPQHLFFFFFLFVPFLSLG) is a signal peptide. Topologically, residues 28–280 (QQISVDINSA…DPKPGNDKVK (253 aa)) are extracellular. 2 consecutive Gnk2-homologous domains span residues 42–148 (PSNP…DKPI) and 154–260 (TSPV…SDLR). Asn-120, Asn-165, and Asn-236 each carry an N-linked (GlcNAc...) asparagine glycan. A helical transmembrane segment spans residues 281 to 301 (IIIATVCSVIGFAIIAVFLYF). Residues 302–665 (FMTRNRRTAK…DVTITEFDAR (364 aa)) lie on the Cytoplasmic side of the membrane. Positions 344–624 (FSRDNQLGEG…VVMLNANSFT (281 aa)) constitute a Protein kinase domain. Residues 350-358 (LGEGGFGAV) and Lys-372 each bind ATP. Residue Tyr-417 is modified to Phosphotyrosine. Residue Asp-469 is the Proton acceptor of the active site. Ser-473 bears the Phosphoserine mark. Phosphothreonine is present on Thr-511. A Phosphotyrosine modification is found at Tyr-519.

This sequence belongs to the protein kinase superfamily. Ser/Thr protein kinase family. CRK subfamily.

It localises to the membrane. The enzyme catalyses L-seryl-[protein] + ATP = O-phospho-L-seryl-[protein] + ADP + H(+). It catalyses the reaction L-threonyl-[protein] + ATP = O-phospho-L-threonyl-[protein] + ADP + H(+). The protein is Cysteine-rich receptor-like protein kinase 41 (CRK41) of Arabidopsis thaliana (Mouse-ear cress).